Reading from the N-terminus, the 174-residue chain is MSLNLEQKKAVVAEVSEQVAQAQAIVLAEYRGIEVGDMTKLRAEARKSGVYLRVLKNTLVRRAVDGTQFSGLANDMVGPLVFGISADPVAAAKVLNNFAKANDKFVIKAGALPGKVLDAKGVQSLATLPSREELLAKLLGTMQAPVAQFVRTLNEVPTKFARGLAAVRDQKQAA.

It belongs to the universal ribosomal protein uL10 family. As to quaternary structure, part of the ribosomal stalk of the 50S ribosomal subunit. The N-terminus interacts with L11 and the large rRNA to form the base of the stalk. The C-terminus forms an elongated spine to which L12 dimers bind in a sequential fashion forming a multimeric L10(L12)X complex.

Functionally, forms part of the ribosomal stalk, playing a central role in the interaction of the ribosome with GTP-bound translation factors. This chain is Large ribosomal subunit protein uL10, found in Methylobacillus flagellatus (strain ATCC 51484 / DSM 6875 / VKM B-1610 / KT).